Here is a 147-residue protein sequence, read N- to C-terminus: Large ribosomal subunit protein uL13 (147 aa).

The protein belongs to the universal ribosomal protein uL13 family. As to quaternary structure, part of the 50S ribosomal subunit.

Its function is as follows. This protein is one of the early assembly proteins of the 50S ribosomal subunit, although it is not seen to bind rRNA by itself. It is important during the early stages of 50S assembly. In Deinococcus geothermalis (strain DSM 11300 / CIP 105573 / AG-3a), this protein is Large ribosomal subunit protein uL13.